Consider the following 449-residue polypeptide: MRYLPKSESERRQMLEACGVSTPEELFAHLPDAVRLNRPLNLAPGISEYEIVQYFRERAEQNANGYASFLGAGVYNHYRPVLVDTVVSRGEFLTSYTPYQAEIAQGTLTTIFEFQTMICQLTGMDVANASMYDGSTAVPEAAMMAVRATGKGRVLISRTVHPEYREVLGTYAKHQGMPVQEFGYVAESGGLDLEDLERKMDDLTGAVIIQTPNFFGIVEQVKAAAEIAHKRGALLVVIFTEAVSLGLLEPPADADIVAGELQSFAISPSYGGPYAGIIAVKEKYIRQVPGRLVGQSLDSRGNRAFCLTLSTREQHIRREKATSNICTNQALIALMATVFMTVYGKQGLRELAEQNLAKAHYLASKLKPRFTGKFFNEFVVRAEGQTPEELNKQLLKKKIIGGLPLGRFYPELADSYLVCATEMTRRADMDALVAATTAQPATETVEVTA.

It belongs to the GcvP family. N-terminal subunit subfamily. In terms of assembly, the glycine cleavage system is composed of four proteins: P, T, L and H. In this organism, the P 'protein' is a heterodimer of two subunits.

It carries out the reaction N(6)-[(R)-lipoyl]-L-lysyl-[glycine-cleavage complex H protein] + glycine + H(+) = N(6)-[(R)-S(8)-aminomethyldihydrolipoyl]-L-lysyl-[glycine-cleavage complex H protein] + CO2. In terms of biological role, the glycine cleavage system catalyzes the degradation of glycine. The P protein binds the alpha-amino group of glycine through its pyridoxal phosphate cofactor; CO(2) is released and the remaining methylamine moiety is then transferred to the lipoamide cofactor of the H protein. The chain is Probable glycine dehydrogenase (decarboxylating) subunit 1 from Solibacter usitatus (strain Ellin6076).